The chain runs to 293 residues: Elongation factor Ts (293 aa).

Residues 80-83 (TDFV) are involved in Mg(2+) ion dislocation from EF-Tu.

Belongs to the EF-Ts family.

The protein resides in the cytoplasm. Its function is as follows. Associates with the EF-Tu.GDP complex and induces the exchange of GDP to GTP. It remains bound to the aminoacyl-tRNA.EF-Tu.GTP complex up to the GTP hydrolysis stage on the ribosome. This Burkholderia lata (strain ATCC 17760 / DSM 23089 / LMG 22485 / NCIMB 9086 / R18194 / 383) protein is Elongation factor Ts.